The chain runs to 369 residues: Anhydro-N-acetylmuramic acid kinase (369 aa).

12–19 (GTSMDGVD) contributes to the ATP binding site.

This sequence belongs to the anhydro-N-acetylmuramic acid kinase family.

It catalyses the reaction 1,6-anhydro-N-acetyl-beta-muramate + ATP + H2O = N-acetyl-D-muramate 6-phosphate + ADP + H(+). It functions in the pathway amino-sugar metabolism; 1,6-anhydro-N-acetylmuramate degradation. The protein operates within cell wall biogenesis; peptidoglycan recycling. Functionally, catalyzes the specific phosphorylation of 1,6-anhydro-N-acetylmuramic acid (anhMurNAc) with the simultaneous cleavage of the 1,6-anhydro ring, generating MurNAc-6-P. Is required for the utilization of anhMurNAc either imported from the medium or derived from its own cell wall murein, and thus plays a role in cell wall recycling. The polypeptide is Anhydro-N-acetylmuramic acid kinase (Shewanella putrefaciens (strain CN-32 / ATCC BAA-453)).